A 121-amino-acid polypeptide reads, in one-letter code: Peptidyl-tRNA hydrolase (121 aa).

Belongs to the PTH2 family.

The protein localises to the cytoplasm. The enzyme catalyses an N-acyl-L-alpha-aminoacyl-tRNA + H2O = an N-acyl-L-amino acid + a tRNA + H(+). In terms of biological role, the natural substrate for this enzyme may be peptidyl-tRNAs which drop off the ribosome during protein synthesis. The sequence is that of Peptidyl-tRNA hydrolase from Staphylothermus marinus (strain ATCC 43588 / DSM 3639 / JCM 9404 / F1).